Here is a 395-residue protein sequence, read N- to C-terminus: Chorismate synthase (395 aa).

Positions 40 and 46 each coordinate NADP(+). Residues 135–137 (RAS) and 256–257 (QA) each bind FMN. Positions 272-283 (RRGSQAHDEMRP) are enriched in basic and acidic residues. The interval 272-296 (RRGSQAHDEMRPGPDGILRSTNRAG) is disordered. FMN-binding positions include G300, 315 to 319 (KPIST), and R341.

Belongs to the chorismate synthase family. As to quaternary structure, homotetramer. Requires FMNH2 as cofactor.

It carries out the reaction 5-O-(1-carboxyvinyl)-3-phosphoshikimate = chorismate + phosphate. The protein operates within metabolic intermediate biosynthesis; chorismate biosynthesis; chorismate from D-erythrose 4-phosphate and phosphoenolpyruvate: step 7/7. Functionally, catalyzes the anti-1,4-elimination of the C-3 phosphate and the C-6 proR hydrogen from 5-enolpyruvylshikimate-3-phosphate (EPSP) to yield chorismate, which is the branch point compound that serves as the starting substrate for the three terminal pathways of aromatic amino acid biosynthesis. This reaction introduces a second double bond into the aromatic ring system. This is Chorismate synthase from Rhodococcus jostii (strain RHA1).